A 287-amino-acid polypeptide reads, in one-letter code: Cyclopropane mycolic acid synthase MmaA2 (287 aa).

S-adenosyl-L-methionine-binding positions include 33-34 (YS), 72-74 (GCG), 94-99 (TLSKNQ), 123-124 (WE), and Ile136. Cys269 is an active-site residue.

This sequence belongs to the CFA/CMAS family.

It carries out the reaction a 1-acyl-2-(9Z)-enoyl-sn-glycero-3-phospholipid + S-adenosyl-L-methionine = a 1-acyl-2-(9-cyclopronane)-acyl-sn-glycero-3-phospholipid + S-adenosyl-L-homocysteine + H(+). It functions in the pathway lipid metabolism; mycolic acid biosynthesis. Its function is as follows. Catalyzes the conversion of a double bond to a cis cyclopropane ring at the distal position of an alpha mycolic acid via the transfer of a methylene group from S-adenosyl-L-methionine. MmaA2 also catalyzes the biosynthesis of the cis-cyclopropanated methoxymycolates. Cyclopropanated mycolic acids are key factors participating in cell envelope permeability, host immunomodulation and persistence. The polypeptide is Cyclopropane mycolic acid synthase MmaA2 (cmaC) (Mycobacterium bovis (strain ATCC BAA-935 / AF2122/97)).